We begin with the raw amino-acid sequence, 123 residues long: Large ribosomal subunit protein uL18 (123 aa).

This sequence belongs to the universal ribosomal protein uL18 family. Part of the 50S ribosomal subunit; part of the 5S rRNA/L5/L18/L25 subcomplex. Contacts the 5S and 23S rRNAs.

Its function is as follows. This is one of the proteins that bind and probably mediate the attachment of the 5S RNA into the large ribosomal subunit, where it forms part of the central protuberance. The sequence is that of Large ribosomal subunit protein uL18 from Chlamydia trachomatis serovar A (strain ATCC VR-571B / DSM 19440 / HAR-13).